The following is a 356-amino-acid chain: Fe(3+) ions import ATP-binding protein FbpC 2 (356 aa).

The region spanning 12–246 (LTVKNLNKFF…PNHLETAKFM (235 aa)) is the ABC transporter domain. 44-51 (GSSGCGKT) provides a ligand contact to ATP.

It belongs to the ABC transporter superfamily. Fe(3+) ion importer (TC 3.A.1.10) family. The complex is composed of two ATP-binding proteins (FbpC), two transmembrane proteins (FbpB) and a solute-binding protein (FbpA).

It localises to the cell inner membrane. The catalysed reaction is Fe(3+)(out) + ATP + H2O = Fe(3+)(in) + ADP + phosphate + H(+). Functionally, part of the ABC transporter complex FbpABC involved in Fe(3+) ions import. Responsible for energy coupling to the transport system. The chain is Fe(3+) ions import ATP-binding protein FbpC 2 from Haemophilus influenzae (strain ATCC 51907 / DSM 11121 / KW20 / Rd).